A 133-amino-acid chain; its full sequence is Fatty acid-binding protein, heart (133 aa).

Alanine 2 is modified (N-acetylalanine). At threonine 8 the chain carries Phosphothreonine. Tyrosine 20 bears the Phosphotyrosine; by Tyr-kinases mark. Residue serine 23 is modified to Phosphoserine. Threonine 30 carries the phosphothreonine modification. At serine 83 the chain carries Phosphoserine. 127-129 (RTY) is a (9Z)-octadecenoate binding site. 127–129 (RTY) lines the hexadecanoate pocket. 127–129 (RTY) contacts octadecanoate.

This sequence belongs to the calycin superfamily. Fatty-acid binding protein (FABP) family.

The protein resides in the cytoplasm. FABPs are thought to play a role in the intracellular transport of long-chain fatty acids and their acyl-CoA esters. FABPs are important elements related to the hibernating state in mammals. The polypeptide is Fatty acid-binding protein, heart (FABP3) (Myotis lucifugus (Little brown bat)).